Here is a 371-residue protein sequence, read N- to C-terminus: tRNA 2-selenouridine synthase (371 aa).

The Rhodanese domain maps to 12-135 (FLDDVPMMDM…MRTFLLDTTQ (124 aa)). Cys95 acts as the S-selanylcysteine intermediate in catalysis.

It belongs to the SelU family. In terms of assembly, monomer.

It carries out the reaction 5-methylaminomethyl-2-thiouridine(34) in tRNA + selenophosphate + (2E)-geranyl diphosphate + H2O + H(+) = 5-methylaminomethyl-2-selenouridine(34) in tRNA + (2E)-thiogeraniol + phosphate + diphosphate. The catalysed reaction is 5-methylaminomethyl-2-thiouridine(34) in tRNA + (2E)-geranyl diphosphate = 5-methylaminomethyl-S-(2E)-geranyl-thiouridine(34) in tRNA + diphosphate. It catalyses the reaction 5-methylaminomethyl-S-(2E)-geranyl-thiouridine(34) in tRNA + selenophosphate + H(+) = 5-methylaminomethyl-2-(Se-phospho)selenouridine(34) in tRNA + (2E)-thiogeraniol. The enzyme catalyses 5-methylaminomethyl-2-(Se-phospho)selenouridine(34) in tRNA + H2O = 5-methylaminomethyl-2-selenouridine(34) in tRNA + phosphate. Functionally, involved in the post-transcriptional modification of the uridine at the wobble position (U34) of tRNA(Lys), tRNA(Glu) and tRNA(Gln). Catalyzes the conversion of 2-thiouridine (S2U-RNA) to 2-selenouridine (Se2U-RNA). Acts in a two-step process involving geranylation of 2-thiouridine (S2U) to S-geranyl-2-thiouridine (geS2U) and subsequent selenation of the latter derivative to 2-selenouridine (Se2U) in the tRNA chain. The chain is tRNA 2-selenouridine synthase from Pseudomonas entomophila (strain L48).